The primary structure comprises 255 residues: Imidazole glycerol phosphate synthase subunit HisF (255 aa).

Residues Asp-11 and Asp-130 contribute to the active site.

Belongs to the HisA/HisF family. Heterodimer of HisH and HisF.

The protein localises to the cytoplasm. It catalyses the reaction 5-[(5-phospho-1-deoxy-D-ribulos-1-ylimino)methylamino]-1-(5-phospho-beta-D-ribosyl)imidazole-4-carboxamide + L-glutamine = D-erythro-1-(imidazol-4-yl)glycerol 3-phosphate + 5-amino-1-(5-phospho-beta-D-ribosyl)imidazole-4-carboxamide + L-glutamate + H(+). The protein operates within amino-acid biosynthesis; L-histidine biosynthesis; L-histidine from 5-phospho-alpha-D-ribose 1-diphosphate: step 5/9. Its function is as follows. IGPS catalyzes the conversion of PRFAR and glutamine to IGP, AICAR and glutamate. The HisF subunit catalyzes the cyclization activity that produces IGP and AICAR from PRFAR using the ammonia provided by the HisH subunit. The protein is Imidazole glycerol phosphate synthase subunit HisF of Syntrophotalea carbinolica (strain DSM 2380 / NBRC 103641 / GraBd1) (Pelobacter carbinolicus).